Here is a 119-residue protein sequence, read N- to C-terminus: Microtubule nucleation factor SSNA1 (119 aa).

Thr-2 carries the N-acetylthreonine modification. The important for localization to the centrosome stretch occupies residues 2–32; that stretch reads TQQGAALQNYNNELVKCIEELCQKREELCRQ. The stretch at 13–70 forms a coiled coil; the sequence is NELVKCIEELCQKREELCRQIQEEEDEKQRLQNEVRQLTEKLARVNENLARKIASRNE.

Belongs to the SSNA1 family. Self-associates to form fibrils. Also forms dimers as well as monomers. Interacts with SPAST. In terms of tissue distribution, widely expressed.

The protein localises to the nucleus. It localises to the cytoplasm. It is found in the cytoskeleton. Its subcellular location is the microtubule organizing center. The protein resides in the centrosome. The protein localises to the centriole. It localises to the midbody. It is found in the flagellum basal body. Its subcellular location is the flagellum axoneme. The protein resides in the cell projection. The protein localises to the axon. Functionally, microtubule-binding protein which stabilizes dynamic microtubules by slowing growth and shrinkage at both plus and minus ends and serves as a sensor of microtubule damage, protecting microtubules from the microtubule-severing enzyme SPAST. Induces microtubule branching which is mediated by the formation of long SSNA1 fibrils which guide microtubule protofilaments to split apart from the mother microtubule and form daughter microtubules. Plays a role in axon outgrowth and branching. Required for cell division. The chain is Microtubule nucleation factor SSNA1 from Homo sapiens (Human).